A 426-amino-acid chain; its full sequence is Trophoblast glycoprotein (426 aa).

An N-terminal signal peptide occupies residues 1 to 31 (MPGAGSRGPSAGDGRLRLARLALVLLGWVSA). The Extracellular segment spans residues 32-361 (SAPSSSVPSS…AVLPQSLQTS (330 aa)). Residues 33–47 (APSSSVPSSSTSPAA) are compositionally biased toward low complexity. Residues 33–53 (APSSSVPSSSTSPAAFLASGS) are disordered. An LRRNT domain is found at 53–91 (SAQPPPAERCPAACECSEAARTVKCVNRNLLEVPADLPP). 2 cysteine pairs are disulfide-bonded: Cys62/Cys68 and Cys66/Cys77. LRR repeat units follow at residues 92–113 (YVRN…AFAR), 116–139 (PLAD…GAFE), 141–163 (LPGL…FAFA), 172–210 (PSPL…AALR), 215–238 (LRGL…LLAQ), 239–261 (LPSL…ASFR), and 262–281 (NLTH…VLHN). Asn124 carries an N-linked (GlcNAc...) asparagine glycan. Asn281 carries an N-linked (GlcNAc...) asparagine glycan. The LRRCT domain maps to 289 to 352 (GLAHVKVFLD…LNSSDLDCDA (64 aa)). Disulfide bonds link Cys304–Cys329 and Cys306–Cys350. The helical transmembrane segment at 362 to 382 (YVFLGIVLALIGAIFLLVLYL) threads the bilayer. The Cytoplasmic portion of the chain corresponds to 383–426 (NRKGIKKWMHNIRDACRDHMEGYHYRYEINADPRLTNLSSNSDV). Ser424 bears the Phosphoserine mark.

Post-translationally, highly glycosylated. In terms of tissue distribution, highly expressed in embryo and placenta. In adult, expressed only in brain and ovary. Not detected in kidney small intestine, heart, spleen, testis, liver, lung, thymus and stomach.

It localises to the cell membrane. In terms of biological role, may function as an inhibitor of Wnt/beta-catenin signaling by indirectly interacting with LRP6 and blocking Wnt3a-dependent LRP6 internalization. The chain is Trophoblast glycoprotein (Tpbg) from Mus musculus (Mouse).